A 407-amino-acid polypeptide reads, in one-letter code: Substance-P receptor (407 aa).

The Extracellular portion of the chain corresponds to 1–31 (MDNVLPMDSDLFPNISTNTSESNQFVQPTWQ). Residues Asn14 and Asn18 are each glycosylated (N-linked (GlcNAc...) asparagine). Residues 32–54 (IVLWAAAYTVIVVTSVVGNVVVI) traverse the membrane as a helical segment. Topologically, residues 55 to 64 (WIILAHKRMR) are cytoplasmic. Residues 65 to 86 (TVTNYFLVNLAFAEACMAAFNT) form a helical membrane-spanning segment. The Extracellular portion of the chain corresponds to 87–106 (VVNFTYAVHNVWYYGLFYCK). An intrachain disulfide couples Cys105 to Cys180. A helical membrane pass occupies residues 107-128 (FHNFFPIAALFASIYSMTAVAF). Residues 129-148 (DRYMAIIHPLQPRLSATATK) are Cytoplasmic-facing. A helical transmembrane segment spans residues 149-169 (VVIFVIWVLALLLAFPQGYYS). The Extracellular portion of the chain corresponds to 170–194 (TTETMPSRVVCMIEWPEHPNRTYEK). The chain crosses the membrane as a helical span at residues 195–219 (AYHICVTVLIYFLPLLVIGYAYTVV). Residues 220–248 (GITLWASEIPGDSSDRYHEQVSAKRKVVK) lie on the Cytoplasmic side of the membrane. Residues 249-270 (MMIVVVCTFAICWLPFHVFFLL) traverse the membrane as a helical segment. Residues 271 to 283 (PYINPDLYLKKFI) lie on the Extracellular side of the membrane. The chain crosses the membrane as a helical span at residues 284-308 (QQVYLASMWLAMSSTMYNPIIYCCL). Residues 309–407 (NDRFRLGFKH…SSSFYSNMLA (99 aa)) lie on the Cytoplasmic side of the membrane. A lipid anchor (S-palmitoyl cysteine) is attached at Cys322. Residues 362-407 (VGAHEEEPEEGPKATPSSLDLTSNGSSRSNSKTMTESSSFYSNMLA) form a disordered region. Over residues 376 to 407 (TPSSLDLTSNGSSRSNSKTMTESSSFYSNMLA) the composition is skewed to polar residues.

The protein belongs to the G-protein coupled receptor 1 family. Interacts with ARRB1.

It localises to the cell membrane. This is a receptor for the tachykinin neuropeptide substance P. It is probably associated with G proteins that activate a phosphatidylinositol-calcium second messenger system. The rank order of affinity of this receptor to tachykinins is: substance P &gt; substance K &gt; neuromedin-K. The polypeptide is Substance-P receptor (Tacr1) (Rattus norvegicus (Rat)).